A 1559-amino-acid chain; its full sequence is Arginine-glutamic acid dipeptide repeats protein (1559 aa).

The segment covering 1–36 has biased composition (basic and acidic residues); it reads MTADKDKDKDKEKDRDRDRDRERDKRDKARESENAR. The segment at 1 to 89 is disordered; it reads MTADKDKDKD…KKKSRYERTD (89 aa). Phosphoserine occurs at positions 53 and 56. Basic residues predominate over residues 73-84; the sequence is KSRKKPPKKKSR. The BAH domain maps to 102–282; the sequence is VVYRPGDCVY…PETRRLNSTQ (181 aa). At threonine 119 the chain carries Phosphothreonine. A phosphoserine mark is found at serine 141 and serine 303. The 104-residue stretch at 283–386 folds into the ELM2 domain; the sequence is GEIRVGPSHQ…KALQRLVKKP (104 aa). Residues 390 to 442 enclose the SANT domain; sequence LIEKCWTEDEVKRFVKGLRQYGKNFFRIRKELLPNKETGELITFYYYWKKTPE. The interval 463-494 is disordered; sequence TRTASTPVNTPSRPPSSEFLDLSSASEDDFDS. The span at 464-473 shows a compositional bias: polar residues; sequence RTASTPVNTP. The segment covering 478–487 has biased composition (low complexity); that stretch reads SSEFLDLSSA. Residues 507–532 form a GATA-type zinc finger; it reads RHCFTTTSKDWHHGGRENILLCTDCR. The disordered stretch occupies residues 541–1125; sequence LPPIEKPVDP…PSHASQSARF (585 aa). Lysine 559 is covalently cross-linked (Glycyl lysine isopeptide (Lys-Gly) (interchain with G-Cter in SUMO2)). Phosphoserine is present on residues serine 593, serine 599, and serine 612. Residues 608 to 622 show a composition bias toward low complexity; that stretch reads SGRNSPSAASTSSND. A compositionally biased stretch (basic and acidic residues) spans 623–639; that stretch reads SKAEAVKKSAKKVKEEA. Lysine 636 participates in a covalent cross-link: Glycyl lysine isopeptide (Lys-Gly) (interchain with G-Cter in SUMO2). 4 positions are modified to phosphoserine: serine 641, serine 655, serine 674, and serine 678. The span at 651 to 672 shows a compositional bias: basic and acidic residues; the sequence is EKVASDTEDTDRATSKKTKTQE. Residues 687–707 are compositionally biased toward basic and acidic residues; that stretch reads SDSRSVNDEGSSDPKDIDQDN. A compositionally biased stretch (polar residues) spans 708–735; sequence RSTSPSIPSPQDNESDSDSSAQQQMLQT. A compositionally biased stretch (low complexity) spans 736 to 761; that stretch reads QPPALQAPSGAASAPSTAPPGTTQLP. Over residues 768–791 the composition is skewed to polar residues; it reads SATTVPPQGSPATSQPPNQTQSTV. The segment covering 805–822 has biased composition (pro residues); that stretch reads LHPPRLPSPHPPLQPMTA. Positions 890–900 are enriched in low complexity; that stretch reads QLPASQSALQP. The segment covering 901–931 has biased composition (pro residues); the sequence is QQPPREQPLPPAPLAMPHIKPPPTTPIPQLP. Positions 961 to 971 are enriched in low complexity; sequence KPLSSLSTHHP. The segment covering 1027–1053 has biased composition (pro residues); the sequence is PQHPFVPGGPPPITPPSCPPTSTPPAG. Residues 1054–1068 are compositionally biased toward low complexity; that stretch reads PSSSSQPPCSAAVSS. Residues serine 1098, serine 1105, and serine 1107 each carry the phosphoserine modification. Pro residues predominate over residues 1098–1109; it reads SPPPPPRSPSPE. Threonine 1111 is subject to Phosphothreonine. The stretch at 1148 to 1205 forms a coiled coil; sequence GSKLAKKREEAIEKAKREAEQKAREEREREKEKEKEREREREREREAERAAQKASSSA. Position 1150 is an N6-acetyllysine (lysine 1150). The segment covering 1154-1198 has biased composition (basic and acidic residues); it reads KREEAIEKAKREAEQKAREEREREKEKEKEREREREREREAERAA. Residues 1154 to 1239 form a disordered region; it reads KREEAIEKAK…TTIAAVPPYI (86 aa). Tyrosine 1252 is subject to Phosphotyrosine. Serine 1259 carries the post-translational modification Phosphoserine.

As to quaternary structure, interacts with HDAC1 and ATN1. Interaction with ATN1 is improved when the poly-Gln region of ATN1 is extended. Widely expressed.

The protein resides in the nucleus. It localises to the PML body. Plays a role as a transcriptional repressor during development. May play a role in the control of cell survival. Interacts with FAT1. This Rattus norvegicus (Rat) protein is Arginine-glutamic acid dipeptide repeats protein (Rere).